We begin with the raw amino-acid sequence, 877 residues long: Putative leucine-rich repeat receptor-like serine/threonine-protein kinase At2g19230 (877 aa).

Positions 1–24 (MGNFNFLPLVSFASFVVVLVLVCA) are cleaved as a signal peptide. At 25–517 (QDQSGFVSID…RNKKTERKEY (493 aa)) the chain is on the extracellular side. N-linked (GlcNAc...) asparagine glycans are attached at residues Asn-142, Asn-233, Asn-261, Asn-295, Asn-405, and Asn-420. LRR repeat units lie at residues 439–462 (PLQK…ANLP) and 463–484 (DLTE…KLLE). The chain crosses the membrane as a helical span at residues 518–538 (IIPSVASVTGLFFLLLALISF). Over 539–877 (WQFKKRQQSV…VDPGVLPQPR (339 aa)) the chain is Cytoplasmic. Residues 569–842 (NNFERVLGQG…QVVAELKESL (274 aa)) enclose the Protein kinase domain. Residues 575 to 583 (LGQGGFGKV) and Lys-596 each bind ATP. Residue Tyr-641 is modified to Phosphotyrosine. The active-site Proton acceptor is the Asp-692. Ser-726 bears the Phosphoserine mark. Residues Thr-727 and Thr-732 each carry the phosphothreonine modification.

The protein belongs to the protein kinase superfamily. Ser/Thr protein kinase family.

Its subcellular location is the cell membrane. The catalysed reaction is L-seryl-[protein] + ATP = O-phospho-L-seryl-[protein] + ADP + H(+). It carries out the reaction L-threonyl-[protein] + ATP = O-phospho-L-threonyl-[protein] + ADP + H(+). The polypeptide is Putative leucine-rich repeat receptor-like serine/threonine-protein kinase At2g19230 (Arabidopsis thaliana (Mouse-ear cress)).